The chain runs to 109 residues: Small ribosomal subunit protein bS6c (109 aa).

Belongs to the bacterial ribosomal protein bS6 family.

Its subcellular location is the plastid. It is found in the chloroplast. Its function is as follows. Binds together with bS18 to 16S ribosomal RNA. The protein is Small ribosomal subunit protein bS6c of Pyropia yezoensis (Susabi-nori).